Consider the following 377-residue polypeptide: Prostaglandin reductase-3 (377 aa).

Lys-35 is subject to N6-acetyllysine. NADP(+)-binding residues include Thr-185, Ser-205, Lys-209, Tyr-224, Ser-247, Ile-269, and Tyr-275. Ser-299 carries the phosphoserine modification. Residues 303-305 (FFL) and Asn-361 contribute to the NADP(+) site.

This sequence belongs to the zinc-containing alcohol dehydrogenase family. Quinone oxidoreductase subfamily. As to expression, widely expressed.

The protein localises to the peroxisome. It carries out the reaction 13,14-dihydro-15-oxo-prostaglandin E2 + NADP(+) = 15-oxoprostaglandin E2 + NADPH + H(+). The enzyme catalyses 13,14-dihydro-15-oxo-prostaglandin E1 + NADP(+) = 15-oxoprostaglandin E1 + NADPH + H(+). The catalysed reaction is 13,14-dihydro-15-oxo-PGF2alpha + NADP(+) = 15-oxoprostaglandin F2alpha + NADPH + H(+). It catalyses the reaction 13,14-dihydro-15-oxo-prostaglandin F1alpha + NADP(+) = 15-oxoprostaglandin F1alpha + NADPH + H(+). In terms of biological role, functions as 15-oxo-prostaglandin 13-reductase and acts on 15-keto-PGE1, 15-keto-PGE2, 15-keto-PGE1-alpha and 15-keto-PGE2-alpha with highest efficiency towards 15-keto-PGE2-alpha. Overexpression represses transcriptional activity of PPARG and inhibits adipocyte differentiation. The chain is Prostaglandin reductase-3 from Mus musculus (Mouse).